The sequence spans 254 residues: Type III pantothenate kinase (254 aa).

Asp6–Val13 is an ATP binding site. Residues Tyr100 and Gly107–Arg110 contribute to the substrate site. The active-site Proton acceptor is the Asp109. Residue Asp129 participates in K(+) binding. Thr132 serves as a coordination point for ATP. Thr184 serves as a coordination point for substrate.

It belongs to the type III pantothenate kinase family. Homodimer. It depends on NH4(+) as a cofactor. The cofactor is K(+).

It is found in the cytoplasm. The enzyme catalyses (R)-pantothenate + ATP = (R)-4'-phosphopantothenate + ADP + H(+). It functions in the pathway cofactor biosynthesis; coenzyme A biosynthesis; CoA from (R)-pantothenate: step 1/5. Catalyzes the phosphorylation of pantothenate (Pan), the first step in CoA biosynthesis. The chain is Type III pantothenate kinase from Citrifermentans bemidjiense (strain ATCC BAA-1014 / DSM 16622 / JCM 12645 / Bem) (Geobacter bemidjiensis).